We begin with the raw amino-acid sequence, 581 residues long: DNA primase (581 aa).

Residues 40–64 (CPFHNEKTPSFTVNGEKQFYHCFGC) form a CHC2-type zinc finger. Positions 259–341 (QRLLVVEGYM…GRQVRFMFLP (83 aa)) constitute a Toprim domain. Residues E265, D309, and D311 each coordinate Mg(2+).

Belongs to the DnaG primase family. In terms of assembly, monomer. Interacts with DnaB. The cofactor is Zn(2+). It depends on Mg(2+) as a cofactor.

The catalysed reaction is ssDNA + n NTP = ssDNA/pppN(pN)n-1 hybrid + (n-1) diphosphate.. RNA polymerase that catalyzes the synthesis of short RNA molecules used as primers for DNA polymerase during DNA replication. The polypeptide is DNA primase (Salmonella typhimurium (strain LT2 / SGSC1412 / ATCC 700720)).